Consider the following 260-residue polypeptide: Flagellar basal-body rod protein FlgG (260 aa).

Belongs to the flagella basal body rod proteins family. As to quaternary structure, the basal body constitutes a major portion of the flagellar organelle and consists of four rings (L,P,S, and M) mounted on a central rod. The rod consists of about 26 subunits of FlgG in the distal portion, and FlgB, FlgC and FlgF are thought to build up the proximal portion of the rod with about 6 subunits each.

Its subcellular location is the bacterial flagellum basal body. The chain is Flagellar basal-body rod protein FlgG (flgG) from Buchnera aphidicola subsp. Acyrthosiphon pisum (strain APS) (Acyrthosiphon pisum symbiotic bacterium).